We begin with the raw amino-acid sequence, 463 residues long: Kynurenine 3-monooxygenase (463 aa).

It belongs to the aromatic-ring hydroxylase family. KMO subfamily. Requires FAD as cofactor.

The protein resides in the mitochondrion outer membrane. It catalyses the reaction L-kynurenine + NADPH + O2 + H(+) = 3-hydroxy-L-kynurenine + NADP(+) + H2O. It participates in cofactor biosynthesis; NAD(+) biosynthesis; quinolinate from L-kynurenine: step 1/3. Its function is as follows. Catalyzes the hydroxylation of L-kynurenine (L-Kyn) to form 3-hydroxy-L-kynurenine (L-3OHKyn). Required for synthesis of quinolinic acid. The polypeptide is Kynurenine 3-monooxygenase (Yarrowia lipolytica (strain CLIB 122 / E 150) (Yeast)).